A 507-amino-acid chain; its full sequence is ATP synthase subunit alpha, chloroplastic (507 aa).

170 to 177 (GDRQTGKT) contributes to the ATP binding site.

The protein belongs to the ATPase alpha/beta chains family. In terms of assembly, F-type ATPases have 2 components, CF(1) - the catalytic core - and CF(0) - the membrane proton channel. CF(1) has five subunits: alpha(3), beta(3), gamma(1), delta(1), epsilon(1). CF(0) has four main subunits: a, b, b' and c.

The protein localises to the plastid. Its subcellular location is the chloroplast thylakoid membrane. It carries out the reaction ATP + H2O + 4 H(+)(in) = ADP + phosphate + 5 H(+)(out). Its function is as follows. Produces ATP from ADP in the presence of a proton gradient across the membrane. The alpha chain is a regulatory subunit. The sequence is that of ATP synthase subunit alpha, chloroplastic from Nicotiana tabacum (Common tobacco).